We begin with the raw amino-acid sequence, 382 residues long: Succinyl-diaminopimelate desuccinylase (382 aa).

Residue His-73 coordinates Zn(2+). Residue Asp-75 is part of the active site. Residue Asp-106 participates in Zn(2+) binding. Glu-140 serves as the catalytic Proton acceptor. Zn(2+)-binding residues include Glu-141, Glu-169, and His-355.

This sequence belongs to the peptidase M20A family. DapE subfamily. As to quaternary structure, homodimer. The cofactor is Zn(2+). Co(2+) is required as a cofactor.

The catalysed reaction is N-succinyl-(2S,6S)-2,6-diaminopimelate + H2O = (2S,6S)-2,6-diaminopimelate + succinate. Its pathway is amino-acid biosynthesis; L-lysine biosynthesis via DAP pathway; LL-2,6-diaminopimelate from (S)-tetrahydrodipicolinate (succinylase route): step 3/3. In terms of biological role, catalyzes the hydrolysis of N-succinyl-L,L-diaminopimelic acid (SDAP), forming succinate and LL-2,6-diaminopimelate (DAP), an intermediate involved in the bacterial biosynthesis of lysine and meso-diaminopimelic acid, an essential component of bacterial cell walls. This Cellvibrio japonicus (strain Ueda107) (Pseudomonas fluorescens subsp. cellulosa) protein is Succinyl-diaminopimelate desuccinylase.